The primary structure comprises 47 residues: Small, acid-soluble spore protein N (47 aa).

Composition is skewed to polar residues over residues 1–11 and 29–47; these read MGNPKSNQQPF and KQMQ…TKGE. Residues 1 to 47 form a disordered region; it reads MGNPKSNQQPFVPQHIGTKPREAGGNKGKQMQDQSGQHPQVIQTKGE.

It belongs to the SspN family.

The protein localises to the spore core. This is Small, acid-soluble spore protein N from Anoxybacillus flavithermus (strain DSM 21510 / WK1).